The primary structure comprises 195 residues: dITP/XTP pyrophosphatase (195 aa).

Substrate is bound at residue 8–13 (SNNQGK). The Mg(2+) site is built by E39 and D68. D68 serves as the catalytic Proton acceptor. Substrate-binding positions include S69, 149–152 (FGYD), K172, and 177–178 (HR).

Belongs to the HAM1 NTPase family. As to quaternary structure, homodimer. The cofactor is Mg(2+).

The catalysed reaction is XTP + H2O = XMP + diphosphate + H(+). It carries out the reaction dITP + H2O = dIMP + diphosphate + H(+). The enzyme catalyses ITP + H2O = IMP + diphosphate + H(+). Its function is as follows. Pyrophosphatase that catalyzes the hydrolysis of nucleoside triphosphates to their monophosphate derivatives, with a high preference for the non-canonical purine nucleotides XTP (xanthosine triphosphate), dITP (deoxyinosine triphosphate) and ITP. Seems to function as a house-cleaning enzyme that removes non-canonical purine nucleotides from the nucleotide pool, thus preventing their incorporation into DNA/RNA and avoiding chromosomal lesions. The polypeptide is dITP/XTP pyrophosphatase (Staphylococcus aureus (strain MRSA252)).